The sequence spans 539 residues: GMP synthase [glutamine-hydrolyzing] (539 aa).

The 199-residue stretch at 4-202 (KILILDFGSQ…VLQIAGAKPD (199 aa)) folds into the Glutamine amidotransferase type-1 domain. Catalysis depends on Cys-81, which acts as the Nucleophile. Catalysis depends on residues His-176 and Glu-178. The region spanning 203–395 (WIMKNHIEEA…LGLPPEMVYR (193 aa)) is the GMPS ATP-PPase domain. An ATP-binding site is contributed by 230–236 (SGGVDSS).

Homodimer.

It carries out the reaction XMP + L-glutamine + ATP + H2O = GMP + L-glutamate + AMP + diphosphate + 2 H(+). It participates in purine metabolism; GMP biosynthesis; GMP from XMP (L-Gln route): step 1/1. Its function is as follows. Catalyzes the synthesis of GMP from XMP. The protein is GMP synthase [glutamine-hydrolyzing] of Burkholderia orbicola (strain AU 1054).